The following is a 766-amino-acid chain: UPF0313 protein PP_4872 (766 aa).

The Radical SAM core domain occupies 371–649; it reads AYEMIRFSVN…KAFLRYHDPK (279 aa). Residues Cys385, Cys389, and Cys392 each contribute to the [4Fe-4S] cluster site. The segment at 670 to 766 is disordered; it reads GKHQLIPLHQ…KKPRQPVIPR (97 aa). Basic and acidic residues predominate over residues 723–735; the sequence is KPWDKREKAKAEA.

Belongs to the UPF0313 family. The cofactor is [4Fe-4S] cluster.

The protein is UPF0313 protein PP_4872 of Pseudomonas putida (strain ATCC 47054 / DSM 6125 / CFBP 8728 / NCIMB 11950 / KT2440).